Consider the following 208-residue polypeptide: Small ribosomal subunit protein uS5 (208 aa).

Basic and acidic residues predominate over residues 1–21 (MSDREQRDGGRSAENNNDRKG). A disordered region spans residues 1 to 38 (MSDREQRDGGRSAENNNDRKGRNNGRRNDRRNHQDNER). The S5 DRBM domain maps to 41–104 (YIERVVTINR…EEARKNFFRV (64 aa)).

This sequence belongs to the universal ribosomal protein uS5 family. In terms of assembly, part of the 30S ribosomal subunit. Contacts proteins S4 and S8.

In terms of biological role, with S4 and S12 plays an important role in translational accuracy. Functionally, located at the back of the 30S subunit body where it stabilizes the conformation of the head with respect to the body. This is Small ribosomal subunit protein uS5 from Corynebacterium aurimucosum (strain ATCC 700975 / DSM 44827 / CIP 107346 / CN-1) (Corynebacterium nigricans).